We begin with the raw amino-acid sequence, 310 residues long: tRNA pseudouridine synthase B (310 aa).

The Nucleophile role is filled by Asp-38.

The protein belongs to the pseudouridine synthase TruB family. Type 1 subfamily.

The catalysed reaction is uridine(55) in tRNA = pseudouridine(55) in tRNA. Responsible for synthesis of pseudouridine from uracil-55 in the psi GC loop of transfer RNAs. In Geotalea uraniireducens (strain Rf4) (Geobacter uraniireducens), this protein is tRNA pseudouridine synthase B.